Consider the following 91-residue polypeptide: Small ribosomal subunit protein uS19 (91 aa).

It belongs to the universal ribosomal protein uS19 family.

Its function is as follows. Protein S19 forms a complex with S13 that binds strongly to the 16S ribosomal RNA. This chain is Small ribosomal subunit protein uS19, found in Fusobacterium nucleatum subsp. nucleatum (strain ATCC 25586 / DSM 15643 / BCRC 10681 / CIP 101130 / JCM 8532 / KCTC 2640 / LMG 13131 / VPI 4355).